The primary structure comprises 918 residues: Signal transduction histidine-protein kinase BarA (918 aa).

Over 1–9 the chain is Cytoplasmic; sequence MTNYSLRAR. The chain crosses the membrane as a helical span at residues 10 to 31; the sequence is MMILILAPTVLIGLLLSIFFVV. The Periplasmic portion of the chain corresponds to 32–176; that stretch reads HRYNDLQRQL…KSVRLQQYKE (145 aa). Residues 177-196 form a helical membrane-spanning segment; it reads IFISSVMMLFCIGIALIFGW. At 197–918 the chain is on the cytoplasmic side; sequence RLMRDVTGPI…VAREASKILG (722 aa). The HAMP domain maps to 200 to 252; the sequence is RDVTGPIRNMVNTVDRIRRGQLDSRVEGFMLGELDMLKNGINSMAMSLAAYHE. The Histidine kinase domain occupies 299 to 520; it reads NMSHELRTPL…TFWFHINLDL (222 aa). A Phosphohistidine; by autocatalysis modification is found at His302. In terms of domain architecture, Response regulatory spans 669 to 785; it reads TVMAVDDNPA…RLHNLLLRYK (117 aa). A 4-aspartylphosphate modification is found at Asp718. The region spanning 822 to 918 is the HPt domain; sequence KTDLARDMLQ…VAREASKILG (97 aa). At His861 the chain carries Phosphohistidine.

Activation requires a sequential transfer of a phosphate group from a His in the primary transmitter domain, to an Asp in the receiver domain and to a His in the secondary transmitter domain.

It is found in the cell inner membrane. It catalyses the reaction ATP + protein L-histidine = ADP + protein N-phospho-L-histidine.. Functionally, member of the two-component regulatory system UvrY/BarA involved in the regulation of carbon metabolism via the CsrA/CsrB regulatory system. Phosphorylates UvrY, probably via a four-step phosphorelay. The polypeptide is Signal transduction histidine-protein kinase BarA (barA) (Escherichia coli O157:H7).